The chain runs to 1465 residues: Vacuolar heme ABC transmembrane exporter abc3 (1465 aa).

Residues 1-8 (MITANKGL) lie on the Extracellular side of the membrane. The chain crosses the membrane as a helical span at residues 9-29 (SLVLLIPNLFALVSGGLQYVF). Over 30-42 (DVRRRIFRPHFSQ) the chain is Cytoplasmic. Residues 43–63 (FWTIWMKFFSIALVIITQIYV) form a helical membrane-spanning segment. Topologically, residues 64 to 69 (GYKTKN) are extracellular. A helical membrane pass occupies residues 70–90 (IGWNFFSVVTYCFVLFLQFAE). Over 91 to 97 (QSTLRVP) the chain is Cytoplasmic. The chain crosses the membrane as a helical span at residues 98-118 (MASLLIFWLLKVVTSLLILLF). At 119–129 (SPYIAITSMAR) the chain is on the extracellular side. Residues 130–150 (LLTLITLFCSLVCFISEVYVP) form a helical membrane-spanning segment. Residue 151 to 152 (PC) coordinates heme. Residues 151 to 235 (PCNRVWYSDD…IYHSKNKRRS (85 aa)) are Cytoplasmic-facing. The helical transmembrane segment at 236–256 (LFLWKLLFFNHWKLVALITIT) threads the bilayer. Positions 250 to 539 (VALITITKLI…LPTVISSLLE (290 aa)) constitute an ABC transmembrane type-1 1 domain. Over 257–291 (KLIQDVLAFVQPTLIQKTILFISSYTSPNPESPSR) the chain is Extracellular. The helical transmembrane segment at 292-312 (GFIIAILVLVANFLQTLLLQQ) threads the bilayer. The Cytoplasmic portion of the chain corresponds to 313–362 (YNQLIMLLGMRWKTELLASIYRKSLLLSSSARQNRSIGDIINYMAVDTQK). A helical membrane pass occupies residues 363 to 383 (ISDLPIYLFIIVSGPFQIALA). The Extracellular segment spans residues 384–394 (LSNLYHLMGYS). A helical transmembrane segment spans residues 395-415 (AFTGVAASVILFPCNIIVANV). The Cytoplasmic portion of the chain corresponds to 416 to 480 (YKKFQSILMK…KIGFITAIGD (65 aa)). The chain crosses the membrane as a helical span at residues 481–501 (FAWIFTTIIVTTVAFGAFIIF). Residues 502–511 (HGKTQALTAD) are Extracellular-facing. Residues 512–532 (IVFPAVSLFNLLQFPLAMLPT) traverse the membrane as a helical segment. Over 533–899 (VISSLLEASV…VYWMYFKSCS (367 aa)) the chain is Cytoplasmic. Positions 575-804 (LEIKSGTFSW…TNSELKQQLS (230 aa)) constitute an ABC transporter 1 domain. 614–621 (GKVGAGKS) contributes to the ATP binding site. Disordered regions lie at residues 805 to 824 (EFND…SYPS) and 840 to 869 (TYSS…TEDD). The chain crosses the membrane as a helical span at residues 900 to 920 (IGLILLYFFFIISGIMMNVAT). Residues 903–1189 (ILLYFFFIIS…IVQQSVDAEN (287 aa)) enclose the ABC transmembrane type-1 2 domain. Residues 921-939 (NVWLKHWSEENGKSSSELN) are Extracellular-facing. A helical membrane pass occupies residues 940-960 (PSPYFYLGIYLFFGFLSCAFI). Over 961–1033 (SSSSLTMTVL…FFFRNSIQVL (73 aa)) the chain is Cytoplasmic. Residues 1034 to 1054 (FILGVICYSAPLSLLLIVPLF) traverse the membrane as a helical segment. Residues 1055–1465 (FLYLYNRAYY…YSLAKESGLI (411 aa)) are Extracellular-facing. The ABC transporter 2 domain occupies 1226-1460 (VSFNHYSAKY…KDSMFYSLAK (235 aa)). Residue 1260–1267 (GRTGAGKS) participates in ATP binding.

It belongs to the ABC transporter superfamily.

It is found in the vacuole membrane. Iron-regulated vacuolar transporter that mobilizes stored heme from the vacuole to the cytosol in response to iron deficiency. The chain is Vacuolar heme ABC transmembrane exporter abc3 from Schizosaccharomyces pombe (strain 972 / ATCC 24843) (Fission yeast).